Consider the following 84-residue polypeptide: Small ribosomal subunit protein bS16 (84 aa).

It belongs to the bacterial ribosomal protein bS16 family.

The polypeptide is Small ribosomal subunit protein bS16 (Burkholderia ambifaria (strain MC40-6)).